We begin with the raw amino-acid sequence, 364 residues long: Tyrosine--tRNA ligase (364 aa).

Residues Tyr-41, Tyr-167, Gln-171, Asp-174, and Gln-189 each contribute to the L-tyrosine site. Positions Lys-238–Ser-242 match the 'KMSKS' region motif. Lys-241 contributes to the ATP binding site.

It belongs to the class-I aminoacyl-tRNA synthetase family. TyrS type 4 subfamily. Homodimer.

It is found in the cytoplasm. It carries out the reaction tRNA(Tyr) + L-tyrosine + ATP = L-tyrosyl-tRNA(Tyr) + AMP + diphosphate + H(+). Functionally, catalyzes the attachment of tyrosine to tRNA(Tyr) in a two-step reaction: tyrosine is first activated by ATP to form Tyr-AMP and then transferred to the acceptor end of tRNA(Tyr). The protein is Tyrosine--tRNA ligase of Sulfurisphaera tokodaii (strain DSM 16993 / JCM 10545 / NBRC 100140 / 7) (Sulfolobus tokodaii).